Here is a 306-residue protein sequence, read N- to C-terminus: uncharacterized protein (306 aa).

The Proton acceptor role is filled by Asp-204.

It belongs to the aminoglycoside phosphotransferase family.

This is an uncharacterized protein from Bacillus subtilis (strain 168).